Consider the following 294-residue polypeptide: Beta-glucoside kinase (294 aa).

5–11 (AFDIGGT) contributes to the ATP binding site.

This sequence belongs to the ROK (NagC/XylR) family.

The enzyme catalyses D-cellobiose + ATP = 6-phospho-beta-D-glucosyl-(1-&gt;4)-D-glucose + ADP + H(+). Its function is as follows. Catalyzes the ATP-dependent phosphorylation of cellobiose to produce cellobiose-6'-P. May have a dual role of kinase and transcriptional regulator of the cellobiose-PTS operon. The sequence is that of Beta-glucoside kinase (bglK) from Listeria innocua serovar 6a (strain ATCC BAA-680 / CLIP 11262).